The following is a 489-amino-acid chain: N-succinylglutamate 5-semialdehyde dehydrogenase (489 aa).

223 to 228 is an NAD(+) binding site; sequence GSSRTG. Catalysis depends on residues glutamate 246 and cysteine 280.

Belongs to the aldehyde dehydrogenase family. AstD subfamily.

The enzyme catalyses N-succinyl-L-glutamate 5-semialdehyde + NAD(+) + H2O = N-succinyl-L-glutamate + NADH + 2 H(+). It functions in the pathway amino-acid degradation; L-arginine degradation via AST pathway; L-glutamate and succinate from L-arginine: step 4/5. Functionally, catalyzes the NAD-dependent reduction of succinylglutamate semialdehyde into succinylglutamate. In Aeromonas salmonicida (strain A449), this protein is N-succinylglutamate 5-semialdehyde dehydrogenase.